Reading from the N-terminus, the 233-residue chain is 7-cyano-7-deazaguanine synthase (233 aa).

ATP is bound at residue 7–17; the sequence is LSGGLDSAVTS. Positions 195, 206, 209, and 212 each coordinate Zn(2+).

This sequence belongs to the QueC family. Zn(2+) serves as cofactor.

The enzyme catalyses 7-carboxy-7-deazaguanine + NH4(+) + ATP = 7-cyano-7-deazaguanine + ADP + phosphate + H2O + H(+). It participates in purine metabolism; 7-cyano-7-deazaguanine biosynthesis. Catalyzes the ATP-dependent conversion of 7-carboxy-7-deazaguanine (CDG) to 7-cyano-7-deazaguanine (preQ(0)). In Methanococcus maripaludis (strain C6 / ATCC BAA-1332), this protein is 7-cyano-7-deazaguanine synthase.